We begin with the raw amino-acid sequence, 376 residues long: Actin, cytoplasmic (376 aa).

It belongs to the actin family.

It is found in the cytoplasm. The protein localises to the cytoskeleton. The enzyme catalyses ATP + H2O = ADP + phosphate + H(+). Actins are highly conserved proteins that are involved in various types of cell motility and are ubiquitously expressed in all eukaryotic cells. This chain is Actin, cytoplasmic, found in Tetrahymena pyriformis.